Here is a 404-residue protein sequence, read N- to C-terminus: Argininosuccinate synthase (404 aa).

ATP is bound by residues 13 to 21 and alanine 41; that span reads AYSGGLDTS. Residues tyrosine 93 and serine 98 each contribute to the L-citrulline site. ATP is bound at residue glycine 123. L-aspartate contacts are provided by threonine 125, asparagine 129, and aspartate 130. Asparagine 129 serves as a coordination point for L-citrulline. L-citrulline-binding residues include arginine 133, serine 182, serine 191, glutamate 267, and tyrosine 279.

It belongs to the argininosuccinate synthase family. Type 1 subfamily. Homotetramer.

It localises to the cytoplasm. It catalyses the reaction L-citrulline + L-aspartate + ATP = 2-(N(omega)-L-arginino)succinate + AMP + diphosphate + H(+). It participates in amino-acid biosynthesis; L-arginine biosynthesis; L-arginine from L-ornithine and carbamoyl phosphate: step 2/3. This is Argininosuccinate synthase from Moritella profunda.